A 387-amino-acid chain; its full sequence is UDP-N-acetylglucosamine--N-acetylmuramyl-(pentapeptide) pyrophosphoryl-undecaprenol N-acetylglucosamine transferase (387 aa).

Residues 23–25 (TGG), N135, R174, S203, I261, 280–285 (ALTVSE), and Q306 contribute to the UDP-N-acetyl-alpha-D-glucosamine site.

Belongs to the glycosyltransferase 28 family. MurG subfamily.

Its subcellular location is the cell inner membrane. It catalyses the reaction di-trans,octa-cis-undecaprenyl diphospho-N-acetyl-alpha-D-muramoyl-L-alanyl-D-glutamyl-meso-2,6-diaminopimeloyl-D-alanyl-D-alanine + UDP-N-acetyl-alpha-D-glucosamine = di-trans,octa-cis-undecaprenyl diphospho-[N-acetyl-alpha-D-glucosaminyl-(1-&gt;4)]-N-acetyl-alpha-D-muramoyl-L-alanyl-D-glutamyl-meso-2,6-diaminopimeloyl-D-alanyl-D-alanine + UDP + H(+). It functions in the pathway cell wall biogenesis; peptidoglycan biosynthesis. Functionally, cell wall formation. Catalyzes the transfer of a GlcNAc subunit on undecaprenyl-pyrophosphoryl-MurNAc-pentapeptide (lipid intermediate I) to form undecaprenyl-pyrophosphoryl-MurNAc-(pentapeptide)GlcNAc (lipid intermediate II). In Colwellia psychrerythraea (strain 34H / ATCC BAA-681) (Vibrio psychroerythus), this protein is UDP-N-acetylglucosamine--N-acetylmuramyl-(pentapeptide) pyrophosphoryl-undecaprenol N-acetylglucosamine transferase.